Here is a 1643-residue protein sequence, read N- to C-terminus: Outer membrane protein B (1643 aa).

The propeptide occupies glycine 1329–serine 1352. In terms of domain architecture, Autotransporter spans glutamate 1355 to phenylalanine 1643.

It belongs to the rickettsiae OmpA/OmpB family.

It is found in the periplasm. The protein localises to the secreted. The protein resides in the cell surface. It localises to the cell outer membrane. Its function is as follows. The 120 kDa surface-exposed protein is a major structural protein which may play a role as a rickettsial virulence factor and/or immunogen during infection. Functionally, the 32 kDa beta peptide may serve as a membrane anchor. It has been shown to adhere to biotinylated Vero cell proteins. This Rickettsia prowazekii (strain Madrid E) protein is Outer membrane protein B (ompB).